The primary structure comprises 546 residues: Choline oxidase (546 aa).

FAD is bound by residues 23-24 (SA), E44, W71, 90-92 (AKV), 96-103 (CSSHNSCI), A232, and Y465. Tele-8alpha-FAD histidine is present on H99. H466 serves as the catalytic Proton acceptor. Residues A500 and 510–512 (NPN) each bind FAD.

This sequence belongs to the GMC oxidoreductase family. As to quaternary structure, homodimer. FAD serves as cofactor.

The enzyme catalyses choline + 2 O2 + H2O = glycine betaine + 2 H2O2 + H(+). It functions in the pathway amine and polyamine biosynthesis; betaine biosynthesis via choline pathway; betaine from choline: step 1/1. Functionally, catalyzes the two-step oxidative conversion of choline to glycine-betaine with betaine aldehyde as an intermediate. Glycine-betaine accumulates to high levels in the cytoplasm of cells to prevent dehydration and plasmolysis in adverse hyperosmotic environments. Accepts either choline or the reaction intermediate betaine-aldehyde as substrate. This chain is Choline oxidase (codA), found in Arthrobacter globiformis.